A 304-amino-acid chain; its full sequence is Ribonuclease HII (304 aa).

Residues 1 to 53 (MIRDTKQPIKVPAKPASRSGGKAKTVKPKTVKPKAVKAADGKAASAKASTSKA) are disordered. Over residues 24–35 (KTVKPKTVKPKA) the composition is skewed to basic residues. Over residues 36–53 (VKAADGKAASAKASTSKA) the composition is skewed to low complexity. The region spanning 96 to 284 (WPIAGCDEAG…VAAAWQKIEG (189 aa)) is the RNase H type-2 domain. Residues aspartate 102, glutamate 103, and aspartate 193 each coordinate a divalent metal cation.

The protein belongs to the RNase HII family. The cofactor is Mn(2+). Mg(2+) is required as a cofactor.

It localises to the cytoplasm. The enzyme catalyses Endonucleolytic cleavage to 5'-phosphomonoester.. Endonuclease that specifically degrades the RNA of RNA-DNA hybrids. The polypeptide is Ribonuclease HII (Rhodopseudomonas palustris (strain ATCC BAA-98 / CGA009)).